The sequence spans 312 residues: Light-independent protochlorophyllide reductase iron-sulfur ATP-binding protein (312 aa).

Residues 55-60 (GIGKST) and Lys84 contribute to the ATP site. Position 59 (Ser59) interacts with Mg(2+). [4Fe-4S] cluster is bound by residues Cys140 and Cys174. ATP-binding positions include 225-226 (NR) and 249-251 (PDL).

It belongs to the NifH/BchL/ChlL family. In terms of assembly, homodimer. Protochlorophyllide reductase is composed of three subunits; BchL, BchN and BchB. It depends on [4Fe-4S] cluster as a cofactor.

It carries out the reaction chlorophyllide a + oxidized 2[4Fe-4S]-[ferredoxin] + 2 ADP + 2 phosphate = protochlorophyllide a + reduced 2[4Fe-4S]-[ferredoxin] + 2 ATP + 2 H2O. The protein operates within porphyrin-containing compound metabolism; bacteriochlorophyll biosynthesis (light-independent). Component of the dark-operative protochlorophyllide reductase (DPOR) that uses Mg-ATP and reduced ferredoxin to reduce ring D of protochlorophyllide (Pchlide) to form chlorophyllide a (Chlide). This reaction is light-independent. The L component serves as a unique electron donor to the NB-component of the complex, and binds Mg-ATP. This chain is Light-independent protochlorophyllide reductase iron-sulfur ATP-binding protein, found in Rhodopseudomonas palustris (strain HaA2).